We begin with the raw amino-acid sequence, 430 residues long: Protein translocase subunit SecY (430 aa).

Helical transmembrane passes span Val18 to Gly38, Phe67 to Leu87, Ile118 to Gly138, Val145 to Leu165, Gly177 to Ile197, Ile213 to Val233, Val270 to Phe290, Pro309 to Ile329, Phe369 to Ala389, and Asp390 to Leu410.

Belongs to the SecY/SEC61-alpha family. In terms of assembly, component of the Sec protein translocase complex. Heterotrimer consisting of SecY, SecE and SecG subunits. The heterotrimers can form oligomers, although 1 heterotrimer is thought to be able to translocate proteins. Interacts with the ribosome. Interacts with SecDF, and other proteins may be involved. Interacts with SecA.

The protein resides in the cell membrane. Its function is as follows. The central subunit of the protein translocation channel SecYEG. Consists of two halves formed by TMs 1-5 and 6-10. These two domains form a lateral gate at the front which open onto the bilayer between TMs 2 and 7, and are clamped together by SecE at the back. The channel is closed by both a pore ring composed of hydrophobic SecY resides and a short helix (helix 2A) on the extracellular side of the membrane which forms a plug. The plug probably moves laterally to allow the channel to open. The ring and the pore may move independently. This chain is Protein translocase subunit SecY, found in Halalkalibacterium halodurans (strain ATCC BAA-125 / DSM 18197 / FERM 7344 / JCM 9153 / C-125) (Bacillus halodurans).